The following is a 789-amino-acid chain: Glycerol-3-phosphate acyltransferase (789 aa).

The HXXXXD motif signature appears at 275–280 (SHRSYI).

It belongs to the GPAT/DAPAT family.

The protein localises to the cell membrane. The enzyme catalyses sn-glycerol 3-phosphate + an acyl-CoA = a 1-acyl-sn-glycero-3-phosphate + CoA. It functions in the pathway phospholipid metabolism; CDP-diacylglycerol biosynthesis; CDP-diacylglycerol from sn-glycerol 3-phosphate: step 1/3. The chain is Glycerol-3-phosphate acyltransferase from Mycobacterium bovis (strain BCG / Pasteur 1173P2).